The following is a 679-amino-acid chain: Pollen receptor-like kinase 4 (679 aa).

Residues 1–39 (MLTWETPVMLASNTASTKKLAFITTFLIIVLCPVTMVMS) form the signal peptide. LRR repeat units follow at residues 118–141 (IKNL…VKNF), 142–165 (GALK…AFDG), 167–191 (HHLK…AYLP), 193–217 (LLEL…DLKL), and 234–257 (SNMD…PCSS). A compositionally biased stretch (low complexity) spans 252-269 (LSPCSSDSGSSPDLPSSP). A disordered region spans residues 252-271 (LSPCSSDSGSSPDLPSSPTE). A helical membrane pass occupies residues 278–298 (FFIIAIVLIVIGIILMIISLV). The disordered stretch occupies residues 311–344 (SAYPSAGQDRTEKYNYDQSTDKDKAADSVTSYTS). Basic and acidic residues predominate over residues 319-336 (DRTEKYNYDQSTDKDKAA). Residues 372 to 646 (RASAEVLGSG…RDAVEKIERL (275 aa)) form the Protein kinase domain. S374 is modified (phosphoserine). ATP contacts are provided by residues 378 to 386 (LGSGSFGSS) and K400. 2 positions are modified to phosphoserine: S452 and S455. T472 is modified (phosphothreonine). Phosphotyrosine is present on Y542.

This sequence belongs to the protein kinase superfamily. Ser/Thr protein kinase family. Interacts in vitro with ROPGEF1 (via PRONE domain). Interacts weakly with the GRI peptide. Expressed in pollen and/or in flowers, but not in leaves.

The protein resides in the membrane. The catalysed reaction is L-seryl-[protein] + ATP = O-phospho-L-seryl-[protein] + ADP + H(+). It carries out the reaction L-threonyl-[protein] + ATP = O-phospho-L-threonyl-[protein] + ADP + H(+). Receptor-like kinase involved in the control of pollen germination and pollen tube polar growth. Can phosphorylate ROPGEF1 in vitro. This Arabidopsis thaliana (Mouse-ear cress) protein is Pollen receptor-like kinase 4.